The primary structure comprises 143 residues: ATP synthase epsilon chain (143 aa).

It belongs to the ATPase epsilon chain family. F-type ATPases have 2 components, CF(1) - the catalytic core - and CF(0) - the membrane proton channel. CF(1) has five subunits: alpha(3), beta(3), gamma(1), delta(1), epsilon(1). CF(0) has three main subunits: a, b and c.

The protein resides in the cell inner membrane. In terms of biological role, produces ATP from ADP in the presence of a proton gradient across the membrane. This is ATP synthase epsilon chain from Dichelobacter nodosus (strain VCS1703A).